The chain runs to 198 residues: Dephospho-CoA kinase (198 aa).

The DPCK domain maps to 4 to 198; sequence IIGITGGIAS…DSQLRRLQNE (195 aa). Residue 12–17 coordinates ATP; the sequence is ASGKST.

It belongs to the CoaE family.

The protein resides in the cytoplasm. It catalyses the reaction 3'-dephospho-CoA + ATP = ADP + CoA + H(+). It functions in the pathway cofactor biosynthesis; coenzyme A biosynthesis; CoA from (R)-pantothenate: step 5/5. Functionally, catalyzes the phosphorylation of the 3'-hydroxyl group of dephosphocoenzyme A to form coenzyme A. The protein is Dephospho-CoA kinase of Streptococcus mutans serotype c (strain ATCC 700610 / UA159).